The primary structure comprises 411 residues: MEEKVGIECYITSTPGMGGEIKAEPEDFYVEEIAEFNLSDEGDFLIIRVEKKNWDTLNFARVLSNALGISQKRISFAGTKDKRALTVQYFSIYGVKKEEIERVNLKDAKIEVIGYARRAIQLGDLLGNFFRIRVYGCRDGEIFQETRNELMEKGTPNFFGLQRFGSIRFITHEVGKLILQNNYEEAFWVYVAKPFEGENEEVRKIREILWETRDAKLGLRELPKYLRYERNLLQKLREGKSEEEALLSLPKNLKMMFVHAYQSYIFNRLLSERIRQFGSLKTLEEGDFACYLTFKTRPTFSDCSEVEVNEARVRFLVKERVASLALPLVGYDTKLKGWSRIALDFLSEDNLDLSSFKTKHKEFSSSGSYRPADTLIEHTGLSFTDSTFSFYLPRGCYATVFLREFLKTELS.

The Nucleophile role is filled by D81. Residues 154 to 375 (GTPNFFGLQR…SGSYRPADTL (222 aa)) enclose the TRUD domain.

It belongs to the pseudouridine synthase TruD family.

The enzyme catalyses uridine(13) in tRNA = pseudouridine(13) in tRNA. Could be responsible for synthesis of pseudouridine from uracil-13 in transfer RNAs. This Archaeoglobus fulgidus (strain ATCC 49558 / DSM 4304 / JCM 9628 / NBRC 100126 / VC-16) protein is Probable tRNA pseudouridine synthase D.